Consider the following 238-residue polypeptide: Heme oxygenase (238 aa).

H17 contributes to the heme b binding site.

It belongs to the heme oxygenase family.

The protein localises to the plastid. It is found in the chloroplast. It carries out the reaction heme b + 3 reduced [NADPH--hemoprotein reductase] + 3 O2 = biliverdin IXalpha + CO + Fe(2+) + 3 oxidized [NADPH--hemoprotein reductase] + 3 H2O + H(+). Functionally, catalyzes the opening of the heme ring with the release of iron. Key enzyme in the synthesis of the chromophoric part of the photosynthetic antennae. The polypeptide is Heme oxygenase (pbsA) (Pyropia yezoensis (Susabi-nori)).